Consider the following 161-residue polypeptide: Cysteine dioxygenase (161 aa).

Residues histidine 75, histidine 77, and histidine 125 each coordinate Fe cation.

The protein belongs to the cysteine dioxygenase family. Requires Fe cation as cofactor.

The catalysed reaction is L-cysteine + O2 = 3-sulfino-L-alanine + H(+). In Bacillus subtilis (strain 168), this protein is Cysteine dioxygenase (cdoA).